A 320-amino-acid polypeptide reads, in one-letter code: Foldase protein PrsA (320 aa).

The signal sequence occupies residues M1–A20. C21 carries the N-palmitoyl cysteine lipid modification. C21 carries the S-diacylglycerol cysteine lipid modification. One can recognise a PpiC domain in the interval E139–K245. A disordered region spans residues E159–A198.

Belongs to the PrsA family.

It is found in the cell membrane. It carries out the reaction [protein]-peptidylproline (omega=180) = [protein]-peptidylproline (omega=0). Functionally, plays a major role in protein secretion by helping the post-translocational extracellular folding of several secreted proteins. The polypeptide is Foldase protein PrsA (Staphylococcus aureus (strain Mu3 / ATCC 700698)).